Here is a 641-residue protein sequence, read N- to C-terminus: Chaperone protein DnaK (641 aa).

Thr199 carries the post-translational modification Phosphothreonine; by autocatalysis. A disordered region spans residues 603-627; sequence YGQQQAEGGAQAAGAAGGSSKADDA. Residues 604 to 616 are compositionally biased toward low complexity; that stretch reads GQQQAEGGAQAAG.

The protein belongs to the heat shock protein 70 family.

Acts as a chaperone. In Azoarcus sp. (strain BH72), this protein is Chaperone protein DnaK.